The primary structure comprises 468 residues: Methylenetetrahydrofolate--tRNA-(uracil-5-)-methyltransferase TrmFO (468 aa).

Residue 10-15 (GGGLAG) participates in FAD binding.

It belongs to the MnmG family. TrmFO subfamily. FAD serves as cofactor.

It localises to the cytoplasm. The catalysed reaction is uridine(54) in tRNA + (6R)-5,10-methylene-5,6,7,8-tetrahydrofolate + NADH + H(+) = 5-methyluridine(54) in tRNA + (6S)-5,6,7,8-tetrahydrofolate + NAD(+). The enzyme catalyses uridine(54) in tRNA + (6R)-5,10-methylene-5,6,7,8-tetrahydrofolate + NADPH + H(+) = 5-methyluridine(54) in tRNA + (6S)-5,6,7,8-tetrahydrofolate + NADP(+). Functionally, catalyzes the folate-dependent formation of 5-methyl-uridine at position 54 (M-5-U54) in all tRNAs. The polypeptide is Methylenetetrahydrofolate--tRNA-(uracil-5-)-methyltransferase TrmFO (Chelativorans sp. (strain BNC1)).